The chain runs to 1078 residues: Extracellular calcium-sensing receptor (1078 aa).

Positions 1-19 are cleaved as a signal peptide; sequence MAFYSCCWVLLALTWHTSA. At 20 to 610 the chain is on the extracellular side; it reads YGPDQRAQKK…KEIEFLSWTE (591 aa). Residues 22 to 188 form a ligand-binding 1 (LB1) region; that stretch reads PDQRAQKKGD…QFKSFLRTIP (167 aa). C60 and C101 form a disulfide bridge. 66 to 70 contributes to the phosphate binding site; sequence RGFRW. Positions 81, 84, 87, and 88 each coordinate Ca(2+). Residue N90 is glycosylated (N-linked (GlcNAc...) asparagine). T100 lines the Ca(2+) pocket. N-linked (GlcNAc...) asparagine glycosylation occurs at N130. Position 145 (T145) interacts with Ca(2+). The L-tryptophan site is built by S147, A168, and S170. Ca(2+)-binding residues include S170, P188, D190, E231, and D234. The tract at residues 189–324 is ligand-binding 2 (LB2); the sequence is NDEHQATAMA…GGTIGFALKA (136 aa). 7 disulfide bridges follow: C236–C561, C358–C395, C437–C449, C542–C562, C546–C565, C568–C582, and C585–C598. The spermine site is built by D238 and S240. 2 N-linked (GlcNAc...) asparagine glycosylation sites follow: N261 and N287. E297 contacts Ca(2+). E297 lines the L-tryptophan pocket. 2 N-linked (GlcNAc...) asparagine glycosylation sites follow: N386 and N400. Position 415–417 (415–417) interacts with phosphate; the sequence is RIS. Residues N446, N468, and N488 are each glycosylated (N-linked (GlcNAc...) asparagine). Y489 provides a ligand contact to Ca(2+). Residue N541 is glycosylated (N-linked (GlcNAc...) asparagine). The tract at residues 542 to 612 is cysteine-rich (CR); the sequence is CSRDCLAGTR…IEFLSWTEPF (71 aa). G557 is a binding site for Ca(2+). N594 carries an N-linked (GlcNAc...) asparagine glycan. A helical transmembrane segment spans residues 611–636; it reads PFGIALTLFAVLGIFLTAFVLGVFIK. Residues 637–648 are Cytoplasmic-facing; it reads FRNTPIVKATNR. The segment at 637–648 is intracellular loop 1 (ICL1); that stretch reads FRNTPIVKATNR. The helical transmembrane segment at 649 to 668 threads the bilayer; sequence ELSYLLLFSLLCCFSSSLFF. Over 669-674 the chain is Extracellular; that stretch reads IGEPQD. A helical membrane pass occupies residues 675–698; that stretch reads WTCRLRQPAFGISFVLCISCILVK. At 699–722 the chain is on the cytoplasmic side; the sequence is TNRVLLVFEAKIPTSFHRKWWGLN. An intracellular loop 2 (ICL2) region spans residues 699 to 722; the sequence is TNRVLLVFEAKIPTSFHRKWWGLN. A helical membrane pass occupies residues 723–745; the sequence is LQFLLVFLCTFMQIVICVIWLYT. Over 746-769 the chain is Extracellular; that stretch reads APPSSYRNQELEDEIIFITCHEGS. Residues 770–789 form a helical membrane-spanning segment; the sequence is LMALGFLIGYTCLLAAICFF. Topologically, residues 790–805 are cytoplasmic; sequence FAFKSRKLPENFNEAK. The segment at 790 to 805 is intracellular loop 3 (ICL3); the sequence is FAFKSRKLPENFNEAK. The chain crosses the membrane as a helical span at residues 806–828; the sequence is FITFSMLIFFIVWISFIPAYAST. The Extracellular portion of the chain corresponds to 829–832; it reads YGKF. The helical transmembrane segment at 833–854 threads the bilayer; the sequence is VSAVEVIAILAASFGLLACIFF. The Cytoplasmic portion of the chain corresponds to 855–1078; that stretch reads NKIYIILFKP…STVTENVVNS (224 aa). Positions 855 to 1078 are C-terminus; it reads NKIYIILFKP…STVTENVVNS (224 aa). The tract at residues 880-900 is interaction with RNF19A; the sequence is AFKVAARATLRRSNVSRKRSS. T888 bears the Phosphothreonine; by PKC mark. The interval 890–898 is arginine-rich retention motif; sequence RRSNVSRKR. S892 is subject to Phosphoserine; by PKC. Disordered stretches follow at residues 892-963, 986-1006, and 1030-1055; these read SNVS…PRCK, AMAH…SSDT, and TGLQ…PALV. At S899 the chain carries Phosphoserine; by PKA. Low complexity predominate over residues 900–918; the sequence is SSLGGSTGSTPSSSISSKS. At S920 the chain carries Phosphoserine. Low complexity predominate over residues 932-960; that stretch reads QQQPLALTQQEQQQQPLTLPQQQRSQQQP. The span at 993-1006 shows a compositional bias: polar residues; sequence THQNSLEAQKSSDT. S1061 bears the Phosphoserine mark.

It belongs to the G-protein coupled receptor 3 family. Homodimer; disulfide-linked. Interacts with VCP. Interacts with ARRB1. Post-translationally, phosphorylation at Thr-888 by PKC impairs coupling with G(q)/G(11) G-proteins, while it does not affect G(i)/G(o)-coupling. Phosphorylation at Ser-892 by PKC and Ser-899 by PKA promote plasma membrane localization. In terms of processing, ubiquitinated by RNF19A; which induces proteasomal degradation. N-glycosylated. In terms of tissue distribution, expressed in the temporal lobe, frontal lobe, parietal lobe, hippocampus, and cerebellum. Also found in kidney, lung, liver, heart, skeletal muscle, placenta.

It localises to the cell membrane. With respect to regulation, in resting state, adopts an open conformation, anion-binding promoting the inactive configuration. Upon aromatic amino acid-binding, the groove in the extracellular venus flytrap module is closed, thereby inducing the formation of a novel homodimer interface between subunits. Calcium ions stabilize the active state by enhancing homodimer interactions between membrane-proximal domains to fully activate the receptor. Upon activation, the homodimer adopts an asymmetric configuration of the 7-transmembrane region that primes one protomer for G-protein coupling. G-protein binding expands the transmembrane dimer interface; the restriction imposed by the receptor dimer, in combination with intracellular loop 2 (ICL2), enables G-protein activation by facilitating conformational transition of G-protein alpha. Coupling to different classes of G-proteins results in distinct CASR-G-protein interfaces. Activated by glucose, which acts as a positive allosteric modulator. Activated by positive allosteric modulator drugs cinacalcet, evocalcet and etelcalcetide, which are clinically used for the treatment of hyperparathyroidism and familial hypocalciuric hypercalcemia. Inhibited by NPS-2143, a negative allosteric modulator tested for the treatment of hypocalcemia. Activated by velcalcetide (AMG 416), a D-amino acid-containing peptide agonist that is being evaluated for the treatment of secondary hyperparathyroidism in chronic kidney disease patients receiving hemodialysis. Velcalcetide agonist acts by forming a disulfide bond with Cys-482. Functionally, G-protein-coupled receptor that senses changes in the extracellular concentration of calcium ions and plays a key role in maintaining calcium homeostasis. Senses fluctuations in the circulating calcium concentration: activated by elevated circulating calcium, leading to decreased parathyroid hormone (PTH) secretion in parathyroid glands. In kidneys, acts as a key regulator of renal tubular calcium resorption. Ligand binding causes a conformation change that triggers signaling via guanine nucleotide-binding proteins (G-proteins) and modulates the activity of downstream effectors. CASR is coupled with different G(q)/G(11), G(i)/G(o)- or G(s)-classes of G-proteins depending on the context. In the parathyroid and kidney, CASR signals through G(q)/G(11) and G(i)/G(o) G-proteins: G(q)/G(11) coupling activates phospholipase C-beta, releasing diacylglycerol (DAG) and inositol 1,4,5-trisphosphate (IP3) second messengers, while G(i)/G(o) coupling mediates inhibition of adenylate cyclase activity. The G-protein-coupled receptor activity is activated by a co-agonist mechanism: aromatic amino acids, such as Trp or Phe, act concertedly with divalent cations, such as calcium or magnesium, to achieve full receptor activation. Acts as an activator of the NLRP3 inflammasome via G(i)/G(o)-mediated signaling: down-regulation of cyclic AMP (cAMP) relieving NLRP3 inhibition by cAMP. Acts as a regulator of proton-sensing receptor GPR68 in a seesaw manner: CASR-mediated signaling inhibits GPR68 signaling in response to extracellular calcium, while GPR68 inhibits CASR in presence of extracellular protons. This is Extracellular calcium-sensing receptor from Homo sapiens (Human).